A 66-amino-acid polypeptide reads, in one-letter code: Sec-independent protein translocase protein TatA (66 aa).

The helical transmembrane segment at 1-21 (MSIGIWQIAIVVILVVLLFGR) threads the bilayer. Residues 43-66 (ATDITDEPEPKNVSENNQDSKDKE) form a disordered region. The segment covering 50-66 (PEPKNVSENNQDSKDKE) has biased composition (basic and acidic residues).

This sequence belongs to the TatA/E family. The Tat system comprises two distinct complexes: a TatABC complex, containing multiple copies of TatA, TatB and TatC subunits, and a separate TatA complex, containing only TatA subunits. Substrates initially bind to the TatABC complex, which probably triggers association of the separate TatA complex to form the active translocon.

Its subcellular location is the cell inner membrane. In terms of biological role, part of the twin-arginine translocation (Tat) system that transports large folded proteins containing a characteristic twin-arginine motif in their signal peptide across membranes. TatA could form the protein-conducting channel of the Tat system. In Pelagibacter ubique (strain HTCC1062), this protein is Sec-independent protein translocase protein TatA.